The primary structure comprises 99 residues: UPF0235 protein HS_1657 (99 aa).

Belongs to the UPF0235 family.

The chain is UPF0235 protein HS_1657 from Histophilus somni (strain 129Pt) (Haemophilus somnus).